A 227-amino-acid chain; its full sequence is Ubiquitin domain-containing protein 1 (227 aa).

A disordered region spans residues 1 to 36 (MGNCVGRQRRERPTAPGHPRKRAGRNEPLKKERLKW). Residues 24–36 (GRNEPLKKERLKW) show a composition bias toward basic and acidic residues. The region spanning 149-224 (FPLKVRLSTG…IQVIINQPPP (76 aa)) is the Ubiquitin-like domain.

Interacts with UBTD1.

Its function is as follows. May be involved in the regulation of cellular senescence through a positive feedback loop with TP53. Is a TP53 downstream target gene that increases the stability of TP53 protein by promoting the ubiquitination and degradation of MDM2. This is Ubiquitin domain-containing protein 1 (UBTD1) from Bos taurus (Bovine).